A 428-amino-acid chain; its full sequence is Immunoglobulin superfamily containing leucine-rich repeat protein (428 aa).

A signal peptide spans 1–18 (MQELHLLWWALLLGLAQA). The region spanning 19–50 (CPEPCDCGEKYGFQIADCAYRDLESVPPGFPA) is the LRRNT domain. An N-linked (GlcNAc...) asparagine glycan is attached at Asn-51. LRR repeat units follow at residues 51–72 (NVTT…AFRE), 75–96 (LLQS…ALAS), 99–122 (HLKS…HNLS), 123–144 (ALQL…AFRS), and 147–168 (ALRS…TFTP). An LRRCT domain is found at 180 to 231 (NPFDCTCGIVWLKTWALTTAVSIPEQDNIACTSPHVLKGTPLSRLPPLPCSA). The Ig-like domain maps to 232–343 (PSVQLSYQPS…GSAESSVDVA (112 aa)). Cysteines 257 and 327 form a disulfide. An N-linked (GlcNAc...) asparagine glycan is attached at Asn-309.

As to expression, expressed in various tissues including retina, heart, skeletal muscle, prostate, ovary, small intestine, thyroid, adrenal cortex, testis, stomach and spinal cord.

The protein resides in the secreted. The polypeptide is Immunoglobulin superfamily containing leucine-rich repeat protein (ISLR) (Homo sapiens (Human)).